The sequence spans 1006 residues: GATA zinc finger domain-containing protein 7 (1006 aa).

Low complexity predominate over residues 55–70 (SSSNNFINNHHNNQSS). Disordered regions lie at residues 55–116 (SSSN…APNL), 128–248 (PFQN…DPFY), 381–499 (NAKK…PLST), 528–638 (STSG…SSNS), and 657–800 (YNSN…NYHD). Residues 71–86 (DIHSISQSTPNLSTLI) are compositionally biased toward polar residues. 2 stretches are compositionally biased toward low complexity: residues 87-110 (SSSS…NSSS) and 128-158 (PFQN…CNNS). Residues 159 to 168 (PVSSSTNYIP) show a composition bias toward polar residues. Low complexity predominate over residues 169–180 (NNSTSNVVLNSS). Residues 181-190 (IPTTSPNVLS) are compositionally biased toward polar residues. Composition is skewed to low complexity over residues 205–241 (NNNN…NNNN) and 388–410 (TNTN…NNNN). The span at 411-426 (IQQANVNTSPISTSTT) shows a compositional bias: polar residues. Low complexity-rich tracts occupy residues 427 to 456 (PNNN…QQAQ) and 468 to 496 (SITP…GASP). Residues 528–539 (STSGMLSTTNPY) show a composition bias toward polar residues. Residues 540–557 (THHSPNTSSTVSSSVTSP) are compositionally biased toward low complexity. A compositionally biased stretch (polar residues) spans 558-589 (LINQYGTNPTLTNNHSFYGSLASNQNTGASDG). Low complexity-rich tracts occupy residues 590–601 (NNNNNNNNNNNN) and 619–638 (SSNP…SSNS). Over residues 662–680 (GSGMTTPQSLGHSPSHNDY) the composition is skewed to polar residues. Low complexity-rich tracts occupy residues 681–706 (NSNN…NSNN) and 713–785 (SNSS…SSNN). The GATA-type zinc-finger motif lies at 842–867 (CHNCGTKNTPEWRRGPSGPATLCNAC). The tract at residues 925 to 957 (NNASSSSSSSSSSSSSSSSSSSTSSYSSSSYNI) is disordered. A compositionally biased stretch (low complexity) spans 928–954 (SSSSSSSSSSSSSSSSSSSTSSYSSSS).

In Dictyostelium discoideum (Social amoeba), this protein is GATA zinc finger domain-containing protein 7 (gtaG).